Reading from the N-terminus, the 478-residue chain is Cytochrome c-552 (478 aa).

An N-terminal signal peptide occupies residues Met-1–Ala-27. Heme c is bound at residue His-91. Residues Cys-119, Cys-122, and Lys-123 each coordinate heme. Heme c is bound by residues Cys-157, Cys-160, His-161, Cys-206, Cys-209, and His-210. Ca(2+) is bound by residues Glu-212, Tyr-213, Lys-258, and Gln-260. Tyr-213 contacts substrate. His-261 lines the substrate pocket. Residues His-272, Cys-279, Cys-282, His-283, His-298, Cys-311, Cys-314, His-315, and His-390 each contribute to the heme c site.

It belongs to the cytochrome c-552 family. It depends on Ca(2+) as a cofactor. Heme c serves as cofactor.

It is found in the periplasm. The enzyme catalyses 6 Fe(III)-[cytochrome c] + NH4(+) + 2 H2O = 6 Fe(II)-[cytochrome c] + nitrite + 8 H(+). It functions in the pathway nitrogen metabolism; nitrate reduction (assimilation). Its function is as follows. Catalyzes the reduction of nitrite to ammonia, consuming six electrons in the process. The sequence is that of Cytochrome c-552 from Aliivibrio fischeri (strain ATCC 700601 / ES114) (Vibrio fischeri).